A 102-amino-acid chain; its full sequence is UPF0147 protein MTH_1407 (102 aa).

The protein belongs to the UPF0147 family.

This Methanothermobacter thermautotrophicus (strain ATCC 29096 / DSM 1053 / JCM 10044 / NBRC 100330 / Delta H) (Methanobacterium thermoautotrophicum) protein is UPF0147 protein MTH_1407.